A 475-amino-acid chain; its full sequence is Trifunctional enzyme subunit beta, mitochondrial (475 aa).

The transit peptide at 1–34 (MTTILTCPFKKLPTTSKWALRFAIRPLSCSSQLR) directs the protein to the mitochondrion. Residue K73 is modified to N6-acetyllysine; alternate. Position 73 is an N6-succinyllysine; alternate (K73). C139 serves as the catalytic Acyl-thioester intermediate. Residues 174–221 (IRHSRKMRKLMLDLNKAKSMGQRLSLISKFRLNFLAPELPAVAEFSTS) lie within the membrane without spanning it. K189 is modified (N6-acetyllysine; alternate). Residue K189 is modified to N6-succinyllysine; alternate. N6-succinyllysine occurs at positions 191, 273, and 292. K294 carries the post-translational modification N6-acetyllysine; alternate. N6-succinyllysine; alternate is present on K294. K299 bears the N6-acetyllysine mark. N6-acetyllysine; alternate is present on K333. Position 333 is an N6-succinyllysine; alternate (K333). N6-acetyllysine occurs at positions 349 and 362. The Proton donor/acceptor role is filled by C459.

The protein belongs to the thiolase-like superfamily. Thiolase family. In terms of assembly, heterotetramer of 2 alpha/HADHA and 2 beta/HADHB subunits; forms the mitochondrial trifunctional enzyme. Also purified as higher order heterooligomers including a 4 alpha/HADHA and 4 beta/HADHB heterooligomer which physiological significance remains unclear. The mitochondrial trifunctional enzyme interacts with MTLN. Interacts with RSAD2/viperin.

It localises to the mitochondrion. Its subcellular location is the mitochondrion inner membrane. It is found in the mitochondrion outer membrane. The protein localises to the endoplasmic reticulum. It carries out the reaction an acyl-CoA + acetyl-CoA = a 3-oxoacyl-CoA + CoA. The enzyme catalyses butanoyl-CoA + acetyl-CoA = 3-oxohexanoyl-CoA + CoA. It catalyses the reaction hexanoyl-CoA + acetyl-CoA = 3-oxooctanoyl-CoA + CoA. The catalysed reaction is octanoyl-CoA + acetyl-CoA = 3-oxodecanoyl-CoA + CoA. It carries out the reaction decanoyl-CoA + acetyl-CoA = 3-oxododecanoyl-CoA + CoA. The enzyme catalyses dodecanoyl-CoA + acetyl-CoA = 3-oxotetradecanoyl-CoA + CoA. It catalyses the reaction tetradecanoyl-CoA + acetyl-CoA = 3-oxohexadecanoyl-CoA + CoA. The protein operates within lipid metabolism; fatty acid beta-oxidation. In terms of biological role, mitochondrial trifunctional enzyme catalyzes the last three of the four reactions of the mitochondrial beta-oxidation pathway. The mitochondrial beta-oxidation pathway is the major energy-producing process in tissues and is performed through four consecutive reactions breaking down fatty acids into acetyl-CoA. Among the enzymes involved in this pathway, the trifunctional enzyme exhibits specificity for long-chain fatty acids. Mitochondrial trifunctional enzyme is a heterotetrameric complex composed of two proteins, the trifunctional enzyme subunit alpha/HADHA carries the 2,3-enoyl-CoA hydratase and the 3-hydroxyacyl-CoA dehydrogenase activities, while the trifunctional enzyme subunit beta/HADHB described here bears the 3-ketoacyl-CoA thiolase activity. This Macaca fascicularis (Crab-eating macaque) protein is Trifunctional enzyme subunit beta, mitochondrial (HADHB).